We begin with the raw amino-acid sequence, 418 residues long: Glutamyl-tRNA(Gln) amidotransferase subunit D (418 aa).

Positions 74–405 (KNISILSTGG…EDAKELMSKD (332 aa)) constitute an Asparaginase/glutaminase domain. Catalysis depends on residues threonine 84, threonine 160, aspartate 161, and lysine 237.

It belongs to the asparaginase 1 family. GatD subfamily. In terms of assembly, heterodimer of GatD and GatE.

It catalyses the reaction L-glutamyl-tRNA(Gln) + L-glutamine + ATP + H2O = L-glutaminyl-tRNA(Gln) + L-glutamate + ADP + phosphate + H(+). Allows the formation of correctly charged Gln-tRNA(Gln) through the transamidation of misacylated Glu-tRNA(Gln) in organisms which lack glutaminyl-tRNA synthetase. The reaction takes place in the presence of glutamine and ATP through an activated gamma-phospho-Glu-tRNA(Gln). The GatDE system is specific for glutamate and does not act on aspartate. The sequence is that of Glutamyl-tRNA(Gln) amidotransferase subunit D from Methanococcus maripaludis (strain C7 / ATCC BAA-1331).